The primary structure comprises 163 residues: Ribosome maturation factor RimP (163 aa).

Belongs to the RimP family.

The protein resides in the cytoplasm. Its function is as follows. Required for maturation of 30S ribosomal subunits. This is Ribosome maturation factor RimP from Streptococcus thermophilus (strain CNRZ 1066).